Reading from the N-terminus, the 144-residue chain is Mediator of RNA polymerase II transcription subunit 21 (144 aa).

It belongs to the Mediator complex subunit 21 family. As to quaternary structure, interacts with PPARG. Component of the Mediator complex, which is composed of MED1, MED4, MED6, MED7, MED8, MED9, MED10, MED11, MED12, MED13, MED13L, MED14, MED15, MED16, MED17, MED18, MED19, MED20, MED21, MED22, MED23, MED24, MED25, MED26, MED27, MED29, MED30, MED31, CCNC, CDK8 and CDC2L6/CDK11. The MED12, MED13, CCNC and CDK8 subunits form a distinct module termed the CDK8 module. Mediator containing the CDK8 module is less active than Mediator lacking this module in supporting transcriptional activation. Individual preparations of the Mediator complex lacking one or more distinct subunits have been variously termed ARC, CRSP, DRIP, PC2, SMCC and TRAP. Interacts with THRA in a ligand-dependent fashion.

It is found in the nucleus. In terms of biological role, component of the Mediator complex, a coactivator involved in the regulated transcription of nearly all RNA polymerase II-dependent genes. Mediator functions as a bridge to convey information from gene-specific regulatory proteins to the basal RNA polymerase II transcription machinery. Mediator is recruited to promoters by direct interactions with regulatory proteins and serves as a scaffold for the assembly of a functional preinitiation complex with RNA polymerase II and the general transcription factors. This Homo sapiens (Human) protein is Mediator of RNA polymerase II transcription subunit 21 (MED21).